We begin with the raw amino-acid sequence, 223 residues long: Transcriptional regulatory protein PhoP (223 aa).

A Response regulatory domain is found at 2–116 (RVLVVEDNAL…EVMARMQALM (115 aa)). Aspartate 51 is subject to 4-aspartylphosphate. Positions 124 to 222 (SQVISLPPFQ…VRGQGYLFEL (99 aa)) form a DNA-binding region, ompR/PhoB-type.

Monomer in the inactive, unphosphorylated state and dimer in the active, phosphorylated state. Phosphorylated by PhoQ.

Its subcellular location is the cytoplasm. Feedback inhibited by MgrB, which seems to bind PhoQ, altering its activity and that of downstream effector PhoP. PhoP-regulated transcription is redox-sensitive, being activated when the periplasm becomes more reducing (deletion of dsbA/dsbB, or treatment with dithiothreitol). MgrB acts between DsbA/DsbB and PhoP/PhoQ in this pathway. In terms of biological role, member of the two-component regulatory system PhoP/PhoQ involved in adaptation to low Mg(2+) environments and the control of acid resistance genes. In low periplasmic Mg(2+), PhoQ phosphorylates PhoP, resulting in the expression of PhoP-activated genes (PAG) and repression of PhoP-repressed genes (PRG). In high periplasmic Mg(2+), PhoQ dephosphorylates phospho-PhoP, resulting in the repression of PAG and may lead to expression of some PRG. Mediates magnesium influx to the cytosol by activation of MgtA. Promotes expression of the two-component regulatory system rstA/rstB and transcription of the hemL, mgrB, nagA, slyB, vboR and yrbL genes. The sequence is that of Transcriptional regulatory protein PhoP (phoP) from Escherichia coli (strain K12).